A 92-amino-acid polypeptide reads, in one-letter code: N(2)-fixation sustaining protein CowN (92 aa).

Belongs to the CowN family.

Its function is as follows. Is required to sustain N(2)-dependent growth in the presence of low levels of carbon monoxide (CO). Probably acts by protecting the N(2) fixation ability of the nitrogenase complex, which is inactivated in the presence of CO. This Rhodopseudomonas palustris (strain ATCC BAA-98 / CGA009) protein is N(2)-fixation sustaining protein CowN.